We begin with the raw amino-acid sequence, 230 residues long: Phosphoribosylformylglycinamidine synthase subunit PurQ (230 aa).

A Glutamine amidotransferase type-1 domain is found at 2-230; the sequence is KIAVTKFLGT…KGMIDYAKRI (229 aa). Cys-85 functions as the Nucleophile in the catalytic mechanism. Active-site residues include His-202 and Glu-204.

In terms of assembly, part of the FGAM synthase complex composed of 1 PurL, 1 PurQ and 2 PurS subunits.

It localises to the cytoplasm. It catalyses the reaction N(2)-formyl-N(1)-(5-phospho-beta-D-ribosyl)glycinamide + L-glutamine + ATP + H2O = 2-formamido-N(1)-(5-O-phospho-beta-D-ribosyl)acetamidine + L-glutamate + ADP + phosphate + H(+). The enzyme catalyses L-glutamine + H2O = L-glutamate + NH4(+). It participates in purine metabolism; IMP biosynthesis via de novo pathway; 5-amino-1-(5-phospho-D-ribosyl)imidazole from N(2)-formyl-N(1)-(5-phospho-D-ribosyl)glycinamide: step 1/2. Part of the phosphoribosylformylglycinamidine synthase complex involved in the purines biosynthetic pathway. Catalyzes the ATP-dependent conversion of formylglycinamide ribonucleotide (FGAR) and glutamine to yield formylglycinamidine ribonucleotide (FGAM) and glutamate. The FGAM synthase complex is composed of three subunits. PurQ produces an ammonia molecule by converting glutamine to glutamate. PurL transfers the ammonia molecule to FGAR to form FGAM in an ATP-dependent manner. PurS interacts with PurQ and PurL and is thought to assist in the transfer of the ammonia molecule from PurQ to PurL. The chain is Phosphoribosylformylglycinamidine synthase subunit PurQ from Methanocaldococcus jannaschii (strain ATCC 43067 / DSM 2661 / JAL-1 / JCM 10045 / NBRC 100440) (Methanococcus jannaschii).